The following is a 485-amino-acid chain: Glutamyl-tRNA(Gln) amidotransferase subunit A (485 aa).

Residues lysine 75 and serine 150 each act as charge relay system in the active site. Serine 174 (acyl-ester intermediate) is an active-site residue.

This sequence belongs to the amidase family. GatA subfamily. As to quaternary structure, heterotrimer of A, B and C subunits.

It carries out the reaction L-glutamyl-tRNA(Gln) + L-glutamine + ATP + H2O = L-glutaminyl-tRNA(Gln) + L-glutamate + ADP + phosphate + H(+). Allows the formation of correctly charged Gln-tRNA(Gln) through the transamidation of misacylated Glu-tRNA(Gln) in organisms which lack glutaminyl-tRNA synthetase. The reaction takes place in the presence of glutamine and ATP through an activated gamma-phospho-Glu-tRNA(Gln). The sequence is that of Glutamyl-tRNA(Gln) amidotransferase subunit A from Picosynechococcus sp. (strain ATCC 27264 / PCC 7002 / PR-6) (Agmenellum quadruplicatum).